The chain runs to 589 residues: Vomeromodulin (589 aa).

The first 29 residues, 1–29, serve as a signal peptide directing secretion; that stretch reads MWVLQALAIMLSIQAGVLDLVEVPPVVRS. Disordered regions lie at residues 49-71 and 146-170; these read GLND…SRGG and LLGK…GLGQ. N-linked (GlcNAc...) asparagine glycosylation is found at N419 and N437.

N-glycosylated. The N-glycans consist mainly of complex sialylated and fucosylated biantennary structures. In terms of tissue distribution, abundant in the lateral nasal glands. Also present in the posterior septal and vomeronasal glands.

The protein localises to the secreted. The polypeptide is Vomeromodulin (Rattus norvegicus (Rat)).